The following is a 279-amino-acid chain: Beta-lactamase (279 aa).

The signal sequence occupies residues 1–21 (MRYVRLCVISLLATLPLVVYA). S66 (acyl-ester intermediate) is an active-site residue. C73 and C119 are oxidised to a cystine. 230-232 (KTG) is a substrate binding site.

Belongs to the class-A beta-lactamase family.

The catalysed reaction is a beta-lactam + H2O = a substituted beta-amino acid. This is Beta-lactamase from Klebsiella pneumoniae.